We begin with the raw amino-acid sequence, 577 residues long: Arginine--tRNA ligase (577 aa).

Positions 123–133 (PNLAKEMHVGH) match the 'HIGH' region motif.

This sequence belongs to the class-I aminoacyl-tRNA synthetase family. Monomer.

It is found in the cytoplasm. The enzyme catalyses tRNA(Arg) + L-arginine + ATP = L-arginyl-tRNA(Arg) + AMP + diphosphate. This is Arginine--tRNA ligase from Marinomonas sp. (strain MWYL1).